The chain runs to 339 residues: Fructose-1,6-bisphosphatase isozyme 2 (339 aa).

The interval 3–10 is important for interaction with ALDOA; the sequence is DRSPFETD. AMP contacts are provided by residues valine 18 and 28–32; that span reads TGELT. Residues aspartate 69 and glutamate 98 each coordinate Mg(2+). Residue 113-114 participates in AMP binding; it reads KY. Mg(2+) is bound by residues aspartate 119, leucine 121, and aspartate 122. Aspartate 122 lines the substrate pocket. Residue arginine 141 participates in AMP binding. Positions 204-208 match the Nuclear localization signal motif; the sequence is KKKGK. 213-216 contacts substrate; it reads NEGY. A phosphotyrosine mark is found at tyrosine 216 and tyrosine 219. Substrate contacts are provided by residues 245-249, tyrosine 265, and lysine 275; that span reads YVGSM. Position 281 (glutamate 281) interacts with Mg(2+).

The protein belongs to the FBPase class 1 family. In terms of assembly, homotetramer. Interacts with ALDOA; the interaction blocks inhibition by physiological concentrations of AMP and reduces inhibition by Ca(2+). Interacts with alpha-actinin and F-actin. It depends on Mg(2+) as a cofactor.

It is found in the cell junction. It localises to the cytoplasm. The protein resides in the nucleus. The protein localises to the myofibril. Its subcellular location is the sarcomere. It is found in the z line. The catalysed reaction is beta-D-fructose 1,6-bisphosphate + H2O = beta-D-fructose 6-phosphate + phosphate. It participates in carbohydrate biosynthesis; gluconeogenesis. Its activity is regulated as follows. Subject to complex allosteric regulation. The enzyme can assume an active R-state, or an inactive T-state. Intermediate conformations may exist. AMP acts as an allosteric inhibitor. Fructose 2,6-bisphosphate acts as a competitive inhibitor. Strongly inhibited by Ca(2+). Functionally, catalyzes the hydrolysis of fructose 1,6-bisphosphate to fructose 6-phosphate in the presence of divalent cations and probably participates in glycogen synthesis from carbohydrate precursors, such as lactate. The chain is Fructose-1,6-bisphosphatase isozyme 2 (FBP2) from Bos taurus (Bovine).